The sequence spans 1379 residues: DNA-directed RNA polymerase subunit beta (1379 aa).

It belongs to the RNA polymerase beta chain family. In terms of assembly, the RNAP catalytic core consists of 2 alpha, 1 beta, 1 beta' and 1 omega subunit. When a sigma factor is associated with the core the holoenzyme is formed, which can initiate transcription.

The enzyme catalyses RNA(n) + a ribonucleoside 5'-triphosphate = RNA(n+1) + diphosphate. In terms of biological role, DNA-dependent RNA polymerase catalyzes the transcription of DNA into RNA using the four ribonucleoside triphosphates as substrates. The protein is DNA-directed RNA polymerase subunit beta of Rhizobium etli (strain ATCC 51251 / DSM 11541 / JCM 21823 / NBRC 15573 / CFN 42).